The sequence spans 422 residues: Acyl-[acyl-carrier-protein] desaturase 6, chloroplastic (422 aa).

Residues 1 to 46 (MAATATMAMPLANRLRCKPNTNSSSPSRTLFGRRVTMISSSRWMCR) constitute a chloroplast transit peptide. Fe cation-binding residues include glutamate 154, glutamate 192, histidine 195, glutamate 245, glutamate 280, and histidine 283.

It belongs to the fatty acid desaturase type 2 family. Homodimer. Requires Fe(2+) as cofactor.

The protein resides in the plastid. The protein localises to the chloroplast. Its pathway is lipid metabolism; fatty acid metabolism. Functionally, introduces a cis double bond in the acyl chain of an acyl-[acyl-carrier protein]. The polypeptide is Acyl-[acyl-carrier-protein] desaturase 6, chloroplastic (Oryza sativa subsp. indica (Rice)).